A 416-amino-acid polypeptide reads, in one-letter code: 26S proteasome regulatory subunit 8 (416 aa).

Low complexity predominate over residues 1-18 (MAPPASTASSADPSKPTA). A disordered region spans residues 1 to 29 (MAPPASTASSADPSKPTAQKLTEESDEKT). 200–207 (GPPGTGKT) lines the ATP pocket.

It belongs to the AAA ATPase family. As to quaternary structure, component of the 19S proteasome regulatory particle complex. The 26S proteasome consists of a 20S core particle (CP) and two 19S regulatory subunits (RP). Interacts with elt-2.

The protein resides in the cytoplasm. It is found in the nucleus. Functionally, component of the 26S proteasome, a multiprotein complex involved in the ATP-dependent degradation of ubiquitinated proteins. This complex plays a key role in the maintenance of protein homeostasis by removing misfolded or damaged proteins, which could impair cellular functions, and by removing proteins whose functions are no longer required. Therefore, the proteasome participates in numerous cellular processes, including cell cycle progression, apoptosis, or DNA damage repair. Belongs to the heterohexameric ring of AAA (ATPases associated with diverse cellular activities) proteins that unfolds ubiquitinated target proteins that are concurrently translocated into a proteolytic chamber and degraded into peptides. In addition, regulates gene expression in response to bacterial infection. Binds to the GATA transcription factor elt-2 to control its transcriptional activity and thus the expression of elt-2-dependent genes in response to infection by Gram-negative bacteria such as P.aeruginosa. The chain is 26S proteasome regulatory subunit 8 from Caenorhabditis elegans.